A 246-amino-acid polypeptide reads, in one-letter code: Sensory transduction protein LytT (246 aa).

Positions K3–K117 constitute a Response regulatory domain. In terms of domain architecture, HTH LytTR-type spans L142–I246.

Post-translationally, phosphorylated by LytS.

Its subcellular location is the cytoplasm. Functionally, member of the two-component regulatory system LytS/LytT that probably regulates genes involved in cell wall metabolism. This chain is Sensory transduction protein LytT (lytT), found in Bacillus cereus (strain ATCC 14579 / DSM 31 / CCUG 7414 / JCM 2152 / NBRC 15305 / NCIMB 9373 / NCTC 2599 / NRRL B-3711).